Here is a 120-residue protein sequence, read N- to C-terminus: NAD(P)H-quinone oxidoreductase subunit 3, chloroplastic (120 aa).

A run of 3 helical transmembrane segments spans residues 9 to 29 (IFWAFLIISSVIPILAFLFSG), 64 to 84 (MFALVFVVFDVETVFLYPWAM), and 88 to 108 (ILGVSVFIEALIFVLILIVGL).

Belongs to the complex I subunit 3 family. As to quaternary structure, NDH is composed of at least 16 different subunits, 5 of which are encoded in the nucleus.

Its subcellular location is the plastid. It localises to the chloroplast thylakoid membrane. It catalyses the reaction a plastoquinone + NADH + (n+1) H(+)(in) = a plastoquinol + NAD(+) + n H(+)(out). The enzyme catalyses a plastoquinone + NADPH + (n+1) H(+)(in) = a plastoquinol + NADP(+) + n H(+)(out). NDH shuttles electrons from NAD(P)H:plastoquinone, via FMN and iron-sulfur (Fe-S) centers, to quinones in the photosynthetic chain and possibly in a chloroplast respiratory chain. The immediate electron acceptor for the enzyme in this species is believed to be plastoquinone. Couples the redox reaction to proton translocation, and thus conserves the redox energy in a proton gradient. This is NAD(P)H-quinone oxidoreductase subunit 3, chloroplastic from Spinacia oleracea (Spinach).